Here is a 554-residue protein sequence, read N- to C-terminus: Glucose-6-phosphate isomerase (554 aa).

Glutamate 359 serves as the catalytic Proton donor. Active-site residues include histidine 390 and lysine 518.

Belongs to the GPI family.

The protein resides in the cytoplasm. It catalyses the reaction alpha-D-glucose 6-phosphate = beta-D-fructose 6-phosphate. Its pathway is carbohydrate biosynthesis; gluconeogenesis. It participates in carbohydrate degradation; glycolysis; D-glyceraldehyde 3-phosphate and glycerone phosphate from D-glucose: step 2/4. Functionally, catalyzes the reversible isomerization of glucose-6-phosphate to fructose-6-phosphate. In Pseudomonas syringae pv. syringae (strain B728a), this protein is Glucose-6-phosphate isomerase.